The following is a 451-amino-acid chain: Probable phosphoglucosamine mutase (451 aa).

Ser-96 (phosphoserine intermediate) is an active-site residue. Ser-96, Asp-233, Asp-235, and Asp-237 together coordinate Mg(2+). Ser-96 is subject to Phosphoserine.

It belongs to the phosphohexose mutase family. It depends on Mg(2+) as a cofactor. In terms of processing, activated by phosphorylation.

The catalysed reaction is alpha-D-glucosamine 1-phosphate = D-glucosamine 6-phosphate. Functionally, catalyzes the conversion of glucosamine-6-phosphate to glucosamine-1-phosphate. The sequence is that of Probable phosphoglucosamine mutase from Pyrococcus abyssi (strain GE5 / Orsay).